Here is a 208-residue protein sequence, read N- to C-terminus: N-(5'-phosphoribosyl)anthranilate isomerase (208 aa).

This sequence belongs to the TrpF family.

It carries out the reaction N-(5-phospho-beta-D-ribosyl)anthranilate = 1-(2-carboxyphenylamino)-1-deoxy-D-ribulose 5-phosphate. It participates in amino-acid biosynthesis; L-tryptophan biosynthesis; L-tryptophan from chorismate: step 3/5. The polypeptide is N-(5'-phosphoribosyl)anthranilate isomerase (Staphylococcus haemolyticus (strain JCSC1435)).